Reading from the N-terminus, the 72-residue chain is UPF0154 protein RBAM_017710 (72 aa).

A helical transmembrane segment spans residues 4-24 (WVGILVGVVALLIGVALGFFI).

It belongs to the UPF0154 family.

It localises to the cell membrane. This Bacillus velezensis (strain DSM 23117 / BGSC 10A6 / LMG 26770 / FZB42) (Bacillus amyloliquefaciens subsp. plantarum) protein is UPF0154 protein RBAM_017710.